The primary structure comprises 321 residues: tRNA uridine(34) hydroxylase (321 aa).

The region spanning 123-217 (SDPDVTVIDT…YLEEVPEGNS (95 aa)) is the Rhodanese domain. Cys-177 acts as the Cysteine persulfide intermediate in catalysis. Positions 294-308 (RKGELHIGDRADIAK) are enriched in basic and acidic residues. A disordered region spans residues 294 to 321 (RKGELHIGDRADIAKSRTTQGAPSADGE).

This sequence belongs to the TrhO family.

It carries out the reaction uridine(34) in tRNA + AH2 + O2 = 5-hydroxyuridine(34) in tRNA + A + H2O. In terms of biological role, catalyzes oxygen-dependent 5-hydroxyuridine (ho5U) modification at position 34 in tRNAs. The polypeptide is tRNA uridine(34) hydroxylase (Teredinibacter turnerae (strain ATCC 39867 / T7901)).